Reading from the N-terminus, the 447-residue chain is UMP-CMP kinase 2, mitochondrial (447 aa).

A mitochondrion-targeting transit peptide spans Met1–Tyr73. ATP is bound at residue Gly259–Thr266. Residues Glu380–Met412 are a coiled coil.

Belongs to the thymidylate kinase family. As to expression, strongly expressed in the brain.

The protein localises to the mitochondrion. It carries out the reaction CMP + ATP = CDP + ADP. The catalysed reaction is dCMP + ATP = dCDP + ADP. The enzyme catalyses a 2'-deoxyribonucleoside 5'-diphosphate + ATP = a 2'-deoxyribonucleoside 5'-triphosphate + ADP. It catalyses the reaction a ribonucleoside 5'-diphosphate + ATP = a ribonucleoside 5'-triphosphate + ADP. Mitochondrial nucleotide monophosphate kinase needed for salvage dNTP synthesis that mediates immunomodulatory and antiviral activities through IFN-dependent and IFN-independent pathways. Restricts the replication of multiple viruses including flaviviruses or coronaviruses. Together with viperin/RSAD2 and ddhCTP, suppresses the replication of several coronaviruses through inhibition of the viral RNA-dependent RNA polymerase activities. Concerning flaviviruses, restricts RNA translation when localized to the mitochondria independently of its kinase activity. Is able to phosphorylate dUMP, dCMP, CMP, UMP and monophosphates of the pyrimidine nucleoside analogs ddC, dFdC, araC, BVDU and FdUrd with ATP as phosphate donor. Efficacy is highest for dUMP followed by dCMP while CMP and UMP are poor substrates. Controls therefore mitochondrial DNA synthesis by supplying required deoxyribonucleotides. CMPK2-dependent mitochondrial DNA synthesis is necessary for the production of oxidized mitochondrial DNA fragments after exposure to NLRP3 activators. In turn, cytosolic oxidized mtDNA associates with the NLRP3 inflammasome complex and is required for its activation. This Mus musculus (Mouse) protein is UMP-CMP kinase 2, mitochondrial (Cmpk2).